The primary structure comprises 215 residues: Glycerol-3-phosphate acyltransferase (215 aa).

Transmembrane regions (helical) follow at residues 1-21 (MAFL…SIPT), 57-77 (IFVL…VKLW), 85-105 (MIPL…AVLG), 126-146 (VLLV…LAML), and 165-185 (VLMF…IVGL).

The protein belongs to the PlsY family. In terms of assembly, probably interacts with PlsX.

It is found in the cell inner membrane. The catalysed reaction is an acyl phosphate + sn-glycerol 3-phosphate = a 1-acyl-sn-glycero-3-phosphate + phosphate. It participates in lipid metabolism; phospholipid metabolism. Catalyzes the transfer of an acyl group from acyl-phosphate (acyl-PO(4)) to glycerol-3-phosphate (G3P) to form lysophosphatidic acid (LPA). This enzyme utilizes acyl-phosphate as fatty acyl donor, but not acyl-CoA or acyl-ACP. This is Glycerol-3-phosphate acyltransferase from Crocosphaera subtropica (strain ATCC 51142 / BH68) (Cyanothece sp. (strain ATCC 51142)).